A 357-amino-acid chain; its full sequence is MDLPINLTSFSLSTPSTLEPNRSLDTEALRTSQSFLSAFRVLVLTLLGFLAAATFTWNLLVLATILRVRTFHRVPHNLVASMAISDVLVAVLVMPLSLVHELSGRRWQLGRRLCQLWIACDVLCCTASIWNVTAIALDRYWSITRHLEYTLRARKRVSNVMILLTWALSAVISLAPLLFGWGETYSELSEECQVSREPSYTVFSTVGAFYLPLCVVLFVYWKIYKAAKFRMGSRKTNSVSPIPEAVEVKDASQHPQMVFTVRHATVTFQTEGDTWREQKEQRAALMVGILIGVFVLCWFPFFVTELISPLCSWDIPALWKSIFLWLGYSNSFFNPLIYTAFNRSYSSAFKVFFSKQQ.

Topologically, residues 1–36 are extracellular; the sequence is MDLPINLTSFSLSTPSTLEPNRSLDTEALRTSQSFL. N-linked (GlcNAc...) asparagine glycans are attached at residues Asn-6 and Asn-21. The chain crosses the membrane as a helical span at residues 37–63; that stretch reads SAFRVLVLTLLGFLAAATFTWNLLVLA. Residues 64-76 lie on the Cytoplasmic side of the membrane; that stretch reads TILRVRTFHRVPH. The helical transmembrane segment at 77–103 threads the bilayer; the sequence is NLVASMAISDVLVAVLVMPLSLVHELS. Topologically, residues 104-114 are extracellular; it reads GRRWQLGRRLC. Cys-114 and Cys-192 are joined by a disulfide. Residues 115–137 traverse the membrane as a helical segment; sequence QLWIACDVLCCTASIWNVTAIAL. Asp-121 lines the serotonin pocket. Topologically, residues 138 to 155 are cytoplasmic; the sequence is DRYWSITRHLEYTLRARK. Residues 156 to 176 traverse the membrane as a helical segment; that stretch reads RVSNVMILLTWALSAVISLAP. At 177-198 the chain is on the extracellular side; the sequence is LLFGWGETYSELSEECQVSREP. Residues 199–220 traverse the membrane as a helical segment; that stretch reads SYTVFSTVGAFYLPLCVVLFVY. Residues 221–287 lie on the Cytoplasmic side of the membrane; sequence WKIYKAAKFR…QKEQRAALMV (67 aa). The helical transmembrane segment at 288–312 threads the bilayer; it reads GILIGVFVLCWFPFFVTELISPLCS. The Extracellular segment spans residues 313–314; that stretch reads WD. Residues 315-339 traverse the membrane as a helical segment; it reads IPALWKSIFLWLGYSNSFFNPLIYT. Topologically, residues 340–357 are cytoplasmic; the sequence is AFNRSYSSAFKVFFSKQQ.

The protein belongs to the G-protein coupled receptor 1 family. Central nervous system.

It localises to the cell membrane. G-protein coupled receptor for 5-hydroxytryptamine (serotonin), a biogenic hormone that functions as a neurotransmitter, a hormone and a mitogen. Also functions as a receptor for ergot alkaloid derivatives and other psychoactive substances. Ligand binding causes a conformation change that triggers signaling via guanine nucleotide-binding proteins (G proteins) and modulates the activity of downstream effectors. Htr5a is coupled to G(i)/G(o) G alpha proteins and mediates inhibitory neurotransmission: signaling inhibits adenylate cyclase activity and activates a phosphatidylinositol-calcium second messenger system that regulates the release of Ca(2+) ions from intracellular stores. In Rattus norvegicus (Rat), this protein is 5-hydroxytryptamine receptor 5A.